The sequence spans 291 residues: Lipoyl synthase (291 aa).

[4Fe-4S] cluster is bound by residues C36, C41, C47, C62, C66, C69, and S275. The Radical SAM core domain maps to 48 to 264 (FSKKTATFLI…KEFAISIGFK (217 aa)).

The protein belongs to the radical SAM superfamily. Lipoyl synthase family. [4Fe-4S] cluster is required as a cofactor.

Its subcellular location is the cytoplasm. It carries out the reaction [[Fe-S] cluster scaffold protein carrying a second [4Fe-4S](2+) cluster] + N(6)-octanoyl-L-lysyl-[protein] + 2 oxidized [2Fe-2S]-[ferredoxin] + 2 S-adenosyl-L-methionine + 4 H(+) = [[Fe-S] cluster scaffold protein] + N(6)-[(R)-dihydrolipoyl]-L-lysyl-[protein] + 4 Fe(3+) + 2 hydrogen sulfide + 2 5'-deoxyadenosine + 2 L-methionine + 2 reduced [2Fe-2S]-[ferredoxin]. It participates in protein modification; protein lipoylation via endogenous pathway; protein N(6)-(lipoyl)lysine from octanoyl-[acyl-carrier-protein]: step 2/2. Catalyzes the radical-mediated insertion of two sulfur atoms into the C-6 and C-8 positions of the octanoyl moiety bound to the lipoyl domains of lipoate-dependent enzymes, thereby converting the octanoylated domains into lipoylated derivatives. The protein is Lipoyl synthase of Caldicellulosiruptor bescii (strain ATCC BAA-1888 / DSM 6725 / KCTC 15123 / Z-1320) (Anaerocellum thermophilum).